The sequence spans 514 residues: Peptide chain release factor 3 (514 aa).

The tr-type G domain maps to 8–268 (KKRRTFAIIS…TFLEFAPEPH (261 aa)). GTP is bound by residues 17–24 (SHPDAGKT), 85–89 (DTPGH), and 139–142 (NKLD).

This sequence belongs to the TRAFAC class translation factor GTPase superfamily. Classic translation factor GTPase family. PrfC subfamily.

Its subcellular location is the cytoplasm. Functionally, increases the formation of ribosomal termination complexes and stimulates activities of RF-1 and RF-2. It binds guanine nucleotides and has strong preference for UGA stop codons. It may interact directly with the ribosome. The stimulation of RF-1 and RF-2 is significantly reduced by GTP and GDP, but not by GMP. The polypeptide is Peptide chain release factor 3 (Streptococcus pyogenes serotype M2 (strain MGAS10270)).